We begin with the raw amino-acid sequence, 324 residues long: Fructose-1,6-bisphosphatase class 1 (324 aa).

4 residues coordinate Mg(2+): Glu-88, Asp-107, Leu-109, and Asp-110. Substrate-binding positions include 110 to 113, Asn-199, and Lys-265; that span reads DGSS. Glu-271 serves as a coordination point for Mg(2+).

The protein belongs to the FBPase class 1 family. Homotetramer. The cofactor is Mg(2+).

The protein localises to the cytoplasm. The enzyme catalyses beta-D-fructose 1,6-bisphosphate + H2O = beta-D-fructose 6-phosphate + phosphate. It functions in the pathway carbohydrate biosynthesis; gluconeogenesis. This chain is Fructose-1,6-bisphosphatase class 1, found in Neisseria meningitidis serogroup A / serotype 4A (strain DSM 15465 / Z2491).